Consider the following 89-residue polypeptide: LYR motif-containing protein 4 (89 aa).

Belongs to the complex I LYR family.

The protein localises to the mitochondrion. The protein resides in the nucleus. The protein operates within cofactor biosynthesis; iron-sulfur cluster biosynthesis. Its function is as follows. Required for nuclear and mitochondrial iron-sulfur protein biosynthesis. The polypeptide is LYR motif-containing protein 4 (lyrm4) (Danio rerio (Zebrafish)).